A 274-amino-acid polypeptide reads, in one-letter code: Undecaprenyl-diphosphatase (274 aa).

The next 8 helical transmembrane spans lie at 9-29 (LEYL…FIPV), 47-67 (PGAS…AWYF), 95-115 (ILIG…FVPY), 120-140 (VLRS…FMYL), 161-181 (LIGF…GITI), 197-217 (FSFL…FISS), 224-244 (LGFF…LLAI), and 254-274 (NGLK…LLNL).

It belongs to the UppP family.

It localises to the cell inner membrane. It catalyses the reaction di-trans,octa-cis-undecaprenyl diphosphate + H2O = di-trans,octa-cis-undecaprenyl phosphate + phosphate + H(+). In terms of biological role, catalyzes the dephosphorylation of undecaprenyl diphosphate (UPP). Confers resistance to bacitracin. The sequence is that of Undecaprenyl-diphosphatase from Prochlorococcus marinus (strain AS9601).